The chain runs to 425 residues: Synaptotagmin-4 (425 aa).

The Vesicular portion of the chain corresponds to 1-16; the sequence is MAPITTSRVEFDEIPT. The chain crosses the membrane as a helical span at residues 17–37; that stretch reads VVGIFSAFGLVFTVSLFAWIC. Residues 38 to 425 lie on the Cytoplasmic side of the membrane; the sequence is CQRRSAKSNK…IAKWHMLCDG (388 aa). 2 disordered regions span residues 102 to 121 and 126 to 147; these read NGNF…LENV and FPET…SLTS. A compositionally biased stretch (polar residues) spans 105 to 119; sequence FPKTNPKAGSSSDLE. Ser135 is subject to Phosphoserine; by MAPK8. The span at 137–146 shows a compositional bias: low complexity; sequence ESLKSSTSLT. 2 consecutive C2 domains span residues 153 to 274 and 287 to 420; these read KLGT…MLMT and GRGE…AKWH. Ca(2+) contacts are provided by Asp246, Ser249, and Asp252.

Belongs to the synaptotagmin family. In terms of assembly, interacts with KIF1A; the interaction increases in presence of calcium and decreases when SYT4 is phosphorylated at Ser-135. It depends on Ca(2+) as a cofactor. In terms of processing, phosphorylation at Ser-135 by MAPK8/JNK1 reduces interaction with KIF1A and neuronal dense core vesicles mobility. As to expression, widely expressed. Expressed in the brain. Expressed in pituitary gland, cerebellum, cortex, hypothalamus and hippocampus.

It is found in the cytoplasmic vesicle. Its subcellular location is the secretory vesicle. It localises to the neuronal dense core vesicle membrane. Synaptotagmin family member which does not bind Ca(2+). Involved in neuronal dense core vesicles (DCVs) mobility through its interaction with KIF1A. Upon increased neuronal activity, phosphorylation by MAPK8/JNK1 destabilizes the interaction with KIF1A and captures DCVs to synapses. Plays a role in dendrite formation by melanocytes. In Rattus norvegicus (Rat), this protein is Synaptotagmin-4 (Syt4).